The primary structure comprises 147 residues: Ribonuclease 4 (147 aa).

A signal peptide spans 1-28 (MDIQRTQSLLLLLLLTLLGLGLVQPSYG). A Pyrrolidone carboxylic acid modification is found at Q29. DUMP-binding residues include R35, H40, K68, N71, and T72. H40 acts as the Proton acceptor in catalysis. Intrachain disulfides connect C53–C109, C67–C120, C85–C135, and C92–C99. Residue H144 is the Proton donor of the active site. Residue F145 participates in dUMP binding.

It belongs to the pancreatic ribonuclease family.

The protein localises to the secreted. Its function is as follows. Cleaves preferentially after uridine bases. Has antimicrobial activity against uropathogenic E.coli (UPEC). Probably contributes to urinary tract sterility. The sequence is that of Ribonuclease 4 (Rnase4) from Rattus norvegicus (Rat).